A 445-amino-acid polypeptide reads, in one-letter code: Phosphoglucosamine mutase (445 aa).

Serine 102 (phosphoserine intermediate) is an active-site residue. Positions 102, 241, 243, and 245 each coordinate Mg(2+). Residue serine 102 is modified to Phosphoserine.

This sequence belongs to the phosphohexose mutase family. Mg(2+) is required as a cofactor. Activated by phosphorylation.

It carries out the reaction alpha-D-glucosamine 1-phosphate = D-glucosamine 6-phosphate. Functionally, catalyzes the conversion of glucosamine-6-phosphate to glucosamine-1-phosphate. In Salmonella choleraesuis (strain SC-B67), this protein is Phosphoglucosamine mutase.